Here is a 723-residue protein sequence, read N- to C-terminus: PX domain-containing protein EREL1 (723 aa).

Basic residues predominate over residues 1-12 (MMQRRSPPKHRH). The segment at 1 to 26 (MMQRRSPPKHRHDGTSPLPLGMDWSP) is disordered. Residues 48-165 (YCVTIPSWIV…SFLELEAAAR (118 aa)) enclose the PX domain. Disordered stretches follow at residues 169-193 (QDVD…MVHP) and 209-230 (YGSD…QDDI). Low complexity predominate over residues 172–193 (DQNASDSNNDRSSTSSSPMVHP). A compositionally biased stretch (polar residues) spans 209–225 (YGSDTAYETSEVGSPSV). Coiled-coil stretches lie at residues 401 to 474 (NERL…LRQK) and 503 to 555 (KHVL…LEKE). The interval 698–723 (DVKTTEDVNEENSDEKDEASRETLKR) is disordered. The segment covering 704–714 (DVNEENSDEKD) has biased composition (acidic residues).

Its subcellular location is the cytoplasm. It is found in the cytosol. The protein resides in the endosome membrane. Its function is as follows. Acts as an effector of RABF2A and RABF2B. Involved in vacuolar transport of storage proteins. Regulates membrane trafficking to protein storage vacuoles (PSVs). Binds specifically to phosphatidylinositol 3-monophosphate (PtdIns3P). This chain is PX domain-containing protein EREL1, found in Arabidopsis thaliana (Mouse-ear cress).